The sequence spans 199 residues: NADH-quinone oxidoreductase subunit C (199 aa).

The protein belongs to the complex I 30 kDa subunit family. NDH-1 is composed of 14 different subunits. Subunits NuoB, C, D, E, F, and G constitute the peripheral sector of the complex.

The protein localises to the cell inner membrane. It catalyses the reaction a quinone + NADH + 5 H(+)(in) = a quinol + NAD(+) + 4 H(+)(out). Its function is as follows. NDH-1 shuttles electrons from NADH, via FMN and iron-sulfur (Fe-S) centers, to quinones in the respiratory chain. The immediate electron acceptor for the enzyme in this species is believed to be ubiquinone. Couples the redox reaction to proton translocation (for every two electrons transferred, four hydrogen ions are translocated across the cytoplasmic membrane), and thus conserves the redox energy in a proton gradient. This chain is NADH-quinone oxidoreductase subunit C, found in Cupriavidus taiwanensis (strain DSM 17343 / BCRC 17206 / CCUG 44338 / CIP 107171 / LMG 19424 / R1) (Ralstonia taiwanensis (strain LMG 19424)).